We begin with the raw amino-acid sequence, 440 residues long: Thymidine phosphorylase (440 aa).

This sequence belongs to the thymidine/pyrimidine-nucleoside phosphorylase family. In terms of assembly, homodimer.

It carries out the reaction thymidine + phosphate = 2-deoxy-alpha-D-ribose 1-phosphate + thymine. Its pathway is pyrimidine metabolism; dTMP biosynthesis via salvage pathway; dTMP from thymine: step 1/2. The enzymes which catalyze the reversible phosphorolysis of pyrimidine nucleosides are involved in the degradation of these compounds and in their utilization as carbon and energy sources, or in the rescue of pyrimidine bases for nucleotide synthesis. This chain is Thymidine phosphorylase, found in Salmonella heidelberg (strain SL476).